Here is a 218-residue protein sequence, read N- to C-terminus: Ras-related protein YPT3 (218 aa).

20–27 (GDSGVGKS) contributes to the GTP binding site. The Effector region motif lies at 42–50 (SKSTIGVEF). GTP contacts are provided by residues 68–72 (DTAGQ) and 126–129 (NKSD). The interval 186–205 (GDEGATSSAPPKGETINIKD) is disordered. S-geranylgeranyl cysteine attachment occurs at residues Cys-215 and Cys-216.

The protein belongs to the small GTPase superfamily. Rab family. Its expression is weak in leaves, higher in stems and roots, but highest in petals, stigma and stamens.

The protein resides in the cell membrane. Its function is as follows. Protein transport. Probably involved in vesicular traffic. The sequence is that of Ras-related protein YPT3 (YPT3) from Nicotiana plumbaginifolia (Leadwort-leaved tobacco).